Here is a 312-residue protein sequence, read N- to C-terminus: Ribosomal protein L11 methyltransferase (312 aa).

Positions 164, 185, 207, and 249 each coordinate S-adenosyl-L-methionine.

Belongs to the methyltransferase superfamily. PrmA family.

It is found in the cytoplasm. The catalysed reaction is L-lysyl-[protein] + 3 S-adenosyl-L-methionine = N(6),N(6),N(6)-trimethyl-L-lysyl-[protein] + 3 S-adenosyl-L-homocysteine + 3 H(+). Methylates ribosomal protein L11. This is Ribosomal protein L11 methyltransferase from Clostridium novyi (strain NT).